We begin with the raw amino-acid sequence, 494 residues long: Probable capsid protein (494 aa).

Positions 120-123 match the Nuclear localization signal motif; that stretch reads RPKR. The segment at 418 to 435 adopts a CCHC-type zinc-finger fold; it reads CRCWVCNIEGHYANECPN. Residues 474–494 are disordered; that stretch reads LSSSDSELDDTCEESSSEESE. The segment covering 479 to 494 has biased composition (acidic residues); sequence SELDDTCEESSSEESE.

This sequence belongs to the caulimoviridae capsid protein family. Interacts (via nuclear localization signal) with host importin alpha.

Its subcellular location is the virion. It is found in the host nucleus. Its function is as follows. Self assembles to form an icosahedral capsid, about 50 nm in diameter, nm, composed of 420 subunits of the viral capsid protein. The capsid encapsulates the genomic dsDNA. Following virus entry into host cell, provides nuclear import of the viral genome. Virus particles do not enter the nucleus, but dock at the nuclear membrane through the interaction with host importins. The protein is Probable capsid protein of Dianthus caryophyllus (Carnation).